The sequence spans 59 residues: Small ribosomal subunit protein eS17 (59 aa).

It belongs to the eukaryotic ribosomal protein eS17 family.

This Halobacterium salinarum (strain ATCC 29341 / DSM 671 / R1) protein is Small ribosomal subunit protein eS17.